The sequence spans 416 residues: MKSPISLLAAVGVASAASPQTLLSLASTASDIIDASPFLSFHRDIVQIPSISGNETAVGTFVAEFLESHNFTVIKQPVPSSSNGDPNRFNIFAYPSTSPSQGRPDILLTSHIDTVPPFIPYGLHDDANNNSNILISGRGTVDAKASVAAQIFAVLDTLESNPTASLGLLFVVDEEVGGLGMRTFSDNSTLNPSPSPYHTVIFGEPTEQALVAGHKGMLEFPIIATGQAAHSGYPWLGSSAISALLPALSRVDRLGKIPEAEGGLPASEKYGETTVNIGRVDAGVAANVVPSSAIAEVAIRLAAGTPDEAREIVARAVRNATGGDEHVYCDFAAYAGGYAPQDLDTDVPGFEVTTVNYGTDVPNLKVSEGVKRYLYGPGSIHVAHGDNEAITVGQLEEAVRGYKQLIEAAVQRARRT.

Positions 1-16 (MKSPISLLAAVGVASA) are cleaved as a signal peptide. 3 N-linked (GlcNAc...) asparagine glycosylation sites follow: Asn-54, Asn-70, and Asn-129. Zn(2+) is bound at residue Asp-142. The Proton acceptor role is filled by Glu-174. Glu-175 provides a ligand contact to Zn(2+). 2 N-linked (GlcNAc...) asparagine glycosylation sites follow: Asn-187 and Asn-319.

Belongs to the peptidase M20A family. Zn(2+) serves as cofactor.

It localises to the secreted. This is Probable carboxypeptidase An18g06210 from Aspergillus niger (strain ATCC MYA-4892 / CBS 513.88 / FGSC A1513).